A 314-amino-acid chain; its full sequence is Homoserine kinase (314 aa).

Position 96-106 (96-106 (PIGSGLGSSAC)) interacts with ATP.

This sequence belongs to the GHMP kinase family. Homoserine kinase subfamily.

It is found in the cytoplasm. The enzyme catalyses L-homoserine + ATP = O-phospho-L-homoserine + ADP + H(+). It participates in amino-acid biosynthesis; L-threonine biosynthesis; L-threonine from L-aspartate: step 4/5. In terms of biological role, catalyzes the ATP-dependent phosphorylation of L-homoserine to L-homoserine phosphate. This Haemophilus influenzae (strain 86-028NP) protein is Homoserine kinase.